Consider the following 140-residue polypeptide: MNPVTVFFVVVVTVAVCMILFQVYSIYLNYDNIKEFNAMHSPLEYSKMVNVTAIDRRVQDANDDIYDAKQKWRCVKFDDSYVSLSMFGYKADGVGIRRFRTLNGCIDYTFSTSTHSSILNPCIPPNDPKSRECTFLKSAL.

Residues 1–21 traverse the membrane as a helical; Signal-anchor for type II membrane protein segment; that stretch reads MNPVTVFFVVVVTVAVCMILF. Residues 22–140 are Virion surface-facing; sequence QVYSIYLNYD…RECTFLKSAL (119 aa).

This sequence belongs to the poxviridae A28 protein family. Post-translationally, contains two intramolecular disulfide bonds. They are created by the viral disulfide bond formation pathway, a poxvirus-specific pathway that operates on the cytoplasmic side of the MV membranes.

It is found in the virion membrane. Envelope protein required for virus entry into host cell and for cell-cell fusion (syncytium formation). The protein is Envelope protein A28 homolog of Myxoma virus (strain Lausanne) (MYXV).